The following is a 429-amino-acid chain: UDP-N-acetylglucosamine 1-carboxyvinyltransferase 2 (429 aa).

Residue 22–23 (KN) coordinates phosphoenolpyruvate. Arg-93 provides a ligand contact to UDP-N-acetyl-alpha-D-glucosamine. The active-site Proton donor is the Cys-117. Cys-117 is subject to 2-(S-cysteinyl)pyruvic acid O-phosphothioketal. UDP-N-acetyl-alpha-D-glucosamine-binding positions include 122 to 126 (RPIDQ), Asp-305, and Ile-327.

It belongs to the EPSP synthase family. MurA subfamily.

Its subcellular location is the cytoplasm. The catalysed reaction is phosphoenolpyruvate + UDP-N-acetyl-alpha-D-glucosamine = UDP-N-acetyl-3-O-(1-carboxyvinyl)-alpha-D-glucosamine + phosphate. The protein operates within cell wall biogenesis; peptidoglycan biosynthesis. In terms of biological role, cell wall formation. Adds enolpyruvyl to UDP-N-acetylglucosamine. This Bacillus cereus (strain ATCC 14579 / DSM 31 / CCUG 7414 / JCM 2152 / NBRC 15305 / NCIMB 9373 / NCTC 2599 / NRRL B-3711) protein is UDP-N-acetylglucosamine 1-carboxyvinyltransferase 2.